The following is a 322-amino-acid chain: Zinc finger C2HC domain-containing protein CBG14627 (322 aa).

2 consecutive C2HC/C3H-type zinc fingers follow at residues 9–38 (PVYPCPICGRKFVKSSLEKHESACRKLATL) and 119–148 (DYVQCEYCSRNFNAAAAERHIPFCREQTTR). 8 residues coordinate Zn(2+): C13, C16, H28, C32, C123, C126, H138, and C142. The disordered stretch occupies residues 144 to 322 (EQTTRKQGGK…SRNNSRSRIF (179 aa)). Residues 148–168 (RKQGGKSSAGNRGLTSNNYRS) show a composition bias toward polar residues. The segment covering 171–219 (SKHEGRKQESSSRNGSAERKTTTRGRDGSLSRARRDDSNDLTNRRKSLE) has biased composition (basic and acidic residues). Positions 220-238 (TRSQLTTGQANNRTTSLSA) are enriched in polar residues. Positions 278–294 (TTTTASASRSGSGSSSR) are enriched in low complexity. Residues 296-305 (RTRDESRESR) are compositionally biased toward basic and acidic residues. A compositionally biased stretch (low complexity) spans 311–322 (SNSRNNSRSRIF).

The protein belongs to the ZC2HC1 family. Requires Zn(2+) as cofactor.

The sequence is that of Zinc finger C2HC domain-containing protein CBG14627 from Caenorhabditis briggsae.